Reading from the N-terminus, the 342-residue chain is Large ribosomal subunit protein uL10 (342 aa).

The tract at residues 212-342 (EYIDMLQKAY…ALAGLSALFG (131 aa)) is required for interaction with ribosomal protein L12 dimers. The span at 299–308 (QAQVAVATQP) shows a compositional bias: polar residues. The tract at residues 299–342 (QAQVAVATQPSEEEKKEEEKTEEEEKEEEASEEEALAGLSALFG) is disordered. A compositionally biased stretch (acidic residues) spans 318–333 (KTEEEEKEEEASEEEA).

This sequence belongs to the universal ribosomal protein uL10 family. Part of the 50S ribosomal subunit, binds large rRNA. Forms the ribosomal stalk which helps the ribosome interact with GTP-bound translation factors. Forms a heptameric L10(L12)2(L12)2(L12)2 complex, where L10 forms an elongated spine to which the L12 dimers bind in a sequential fashion.

Its function is as follows. Forms the large subunit's ribosomal stalk, playing a central role in the interaction of the ribosome with elongation factors; the stalk complex of P.horikoshii binds to E.coli large subunits and confers on them the ability to interact with eukaryotic elongation factors. Each succesive L12 dimer bound along the P0 spine increases the GTPase activity of elongation factors and increases translation by reconsituted ribosomes, although the first site is the most stimulatory. The chain is Large ribosomal subunit protein uL10 from Pyrococcus horikoshii (strain ATCC 700860 / DSM 12428 / JCM 9974 / NBRC 100139 / OT-3).